A 143-amino-acid chain; its full sequence is Ribosomal RNA large subunit methyltransferase H (143 aa).

S-adenosyl-L-methionine contacts are provided by residues Gly-95 and 111–116 (FSDLTF).

The protein belongs to the RNA methyltransferase RlmH family. Homodimer.

Its subcellular location is the cytoplasm. The catalysed reaction is pseudouridine(1915) in 23S rRNA + S-adenosyl-L-methionine = N(3)-methylpseudouridine(1915) in 23S rRNA + S-adenosyl-L-homocysteine + H(+). Its function is as follows. Specifically methylates the pseudouridine at position 1915 (m3Psi1915) in 23S rRNA. This chain is Ribosomal RNA large subunit methyltransferase H, found in Metamycoplasma arthritidis (strain 158L3-1) (Mycoplasma arthritidis).